The chain runs to 352 residues: N-acetyl-gamma-glutamyl-phosphate reductase (352 aa).

Cys149 is a catalytic residue.

It belongs to the NAGSA dehydrogenase family. Type 1 subfamily.

The protein localises to the cytoplasm. It catalyses the reaction N-acetyl-L-glutamate 5-semialdehyde + phosphate + NADP(+) = N-acetyl-L-glutamyl 5-phosphate + NADPH + H(+). Its pathway is amino-acid biosynthesis; L-arginine biosynthesis; N(2)-acetyl-L-ornithine from L-glutamate: step 3/4. Catalyzes the NADPH-dependent reduction of N-acetyl-5-glutamyl phosphate to yield N-acetyl-L-glutamate 5-semialdehyde. The protein is N-acetyl-gamma-glutamyl-phosphate reductase of Polynucleobacter asymbioticus (strain DSM 18221 / CIP 109841 / QLW-P1DMWA-1) (Polynucleobacter necessarius subsp. asymbioticus).